We begin with the raw amino-acid sequence, 397 residues long: Endoglucanase (397 aa).

The active-site Proton donor is E194. Catalysis depends on E317, which acts as the Nucleophile.

The protein belongs to the glycosyl hydrolase 5 (cellulase A) family.

The enzyme catalyses Endohydrolysis of (1-&gt;4)-beta-D-glucosidic linkages in cellulose, lichenin and cereal beta-D-glucans.. The polypeptide is Endoglucanase (Paenibacillus polymyxa (Bacillus polymyxa)).